The primary structure comprises 243 residues: CTD nuclear envelope phosphatase 1 homolog (243 aa).

Residues 11 to 27 (ALLLLLSKVWTCICFMF) form a helical membrane-spanning segment. The FCP1 homology domain occupies 56 to 223 (SLVQRKTLVL…LSLLPMLDAL (168 aa)).

The protein belongs to the dullard family.

The protein resides in the membrane. The enzyme catalyses O-phospho-L-seryl-[protein] + H2O = L-seryl-[protein] + phosphate. It carries out the reaction O-phospho-L-threonyl-[protein] + H2O = L-threonyl-[protein] + phosphate. Its function is as follows. Serine/threonine protein phosphatase that may dephosphorylate and activate lipin-like phosphatases. Lipins are phosphatidate phosphatases that catalyze the conversion of phosphatidic acid to diacylglycerol and control the metabolism of fatty acids at different levels. May indirectly modulate the lipid composition of nuclear and/or endoplasmic reticulum membranes and be required for proper nuclear membrane morphology and/or dynamics. May also indirectly regulate the production of lipid droplets and triacylglycerol. This chain is CTD nuclear envelope phosphatase 1 homolog (l(1)G0269), found in Drosophila pseudoobscura pseudoobscura (Fruit fly).